Here is a 320-residue protein sequence, read N- to C-terminus: Aspartate carbamoyltransferase catalytic subunit (320 aa).

The carbamoyl phosphate site is built by R70 and T71. Residue K98 coordinates L-aspartate. 3 residues coordinate carbamoyl phosphate: R120, H150, and Q153. L-aspartate contacts are provided by R184 and R239. Residues G280 and P281 each contribute to the carbamoyl phosphate site.

Belongs to the aspartate/ornithine carbamoyltransferase superfamily. ATCase family. Heterododecamer (2C3:3R2) of six catalytic PyrB chains organized as two trimers (C3), and six regulatory PyrI chains organized as three dimers (R2).

It carries out the reaction carbamoyl phosphate + L-aspartate = N-carbamoyl-L-aspartate + phosphate + H(+). It participates in pyrimidine metabolism; UMP biosynthesis via de novo pathway; (S)-dihydroorotate from bicarbonate: step 2/3. Its function is as follows. Catalyzes the condensation of carbamoyl phosphate and aspartate to form carbamoyl aspartate and inorganic phosphate, the committed step in the de novo pyrimidine nucleotide biosynthesis pathway. The sequence is that of Aspartate carbamoyltransferase catalytic subunit from Xylella fastidiosa (strain Temecula1 / ATCC 700964).